The chain runs to 241 residues: Lipoprotein MxiJ (241 aa).

A signal peptide spans 1–17; that stretch reads MIRYKGFILFLLLMLIG. A lipid anchor (N-palmitoyl cysteine) is attached at cysteine 18. A lipid anchor (S-diacylglycerol cysteine) is attached at cysteine 18.

Belongs to the YscJ lipoprotein family.

Its subcellular location is the cell outer membrane. Its function is as follows. Involved in the secretion of the Ipa antigens. In Shigella sonnei, this protein is Lipoprotein MxiJ (mxiJ).